The chain runs to 813 residues: Ankyrin repeat domain-containing protein SOWAHB (813 aa).

Disordered stretches follow at residues 142-256 and 400-436; these read SAAP…QSLS and ETCGSEESDSGEGGDCDTEPRDNDDADDDTFSSDSHK. Basic and acidic residues predominate over residues 158–176; the sequence is MSEKARVNPSHWDTKRYYP. Residues 177–189 show a composition bias toward pro residues; it reads EDPPVPDSLPVSP. A compositionally biased stretch (polar residues) spans 191–202; that stretch reads CTNTRQSSFTST. Low complexity predominate over residues 208–244; it reads HSLSSNNLSSSFSSPESPGLVAKPYNASPSPAGSSPN. The span at 245-256 shows a compositional bias: polar residues; it reads IREQTPKSQSLS. Residues 400 to 416 are compositionally biased toward acidic residues; the sequence is ETCGSEESDSGEGGDCD. ANK repeat units follow at residues 657–686 and 696–726; these read TGYTALHWFAKHGCIDLFNKVVIGAKKAGI and NGYTPLHIAAIHGHHKVAIMLVEKLKVNVKV.

Belongs to the SOWAH family.

The polypeptide is Ankyrin repeat domain-containing protein SOWAHB (sowahb) (Xenopus laevis (African clawed frog)).